The sequence spans 180 residues: Calcium-binding protein E (180 aa).

4 EF-hand domains span residues 3 to 38 (KVEAQIEKIFTSFDKDGDGNLSWDEVFSRMSSNSNI), 40 to 76 (DPLAATKSMFDHYNRDADTENLSIQEIREVLMSKKIK), 85 to 120 (ALRSKVKDFRKKYDTDNDGVVTFDEMYQLYLKDPDF), and 139 to 174 (RAKSSCRYFFSAVDKDKNDKLSYLEIHEYLKKHPEF). Residues Asp-16, Asp-18, Asp-20, Asn-22, and Glu-27 each contribute to the Ca(2+) site. Ca(2+) contacts are provided by Asp-98, Asp-100, Asp-102, Glu-109, Asp-152, Asp-154, Asn-156, Lys-158, and Glu-163.

The protein is Calcium-binding protein E (cbpE) of Dictyostelium discoideum (Social amoeba).